Reading from the N-terminus, the 243-residue chain is Zinc import ATP-binding protein ZnuC 2 (243 aa).

In terms of domain architecture, ABC transporter spans 3–218 (LSLHQLSVKF…PEYKVLFGLD (216 aa)). 35–42 (GPNGSGKS) is a binding site for ATP.

Belongs to the ABC transporter superfamily. Zinc importer (TC 3.A.1.15.5) family. As to quaternary structure, the complex is composed of two ATP-binding proteins (ZnuC), two transmembrane proteins (ZnuB) and a solute-binding protein (ZnuA).

It localises to the cell inner membrane. The enzyme catalyses Zn(2+)(out) + ATP(in) + H2O(in) = Zn(2+)(in) + ADP(in) + phosphate(in) + H(+)(in). In terms of biological role, part of the ABC transporter complex ZnuABC involved in zinc import. Responsible for energy coupling to the transport system. The sequence is that of Zinc import ATP-binding protein ZnuC 2 from Aliivibrio fischeri (strain ATCC 700601 / ES114) (Vibrio fischeri).